We begin with the raw amino-acid sequence, 246 residues long: tRNA (guanine-N(1)-)-methyltransferase (246 aa).

Residues G112 and 131-136 (IGDYVL) contribute to the S-adenosyl-L-methionine site.

It belongs to the RNA methyltransferase TrmD family. As to quaternary structure, homodimer.

It localises to the cytoplasm. It carries out the reaction guanosine(37) in tRNA + S-adenosyl-L-methionine = N(1)-methylguanosine(37) in tRNA + S-adenosyl-L-homocysteine + H(+). Its function is as follows. Specifically methylates guanosine-37 in various tRNAs. This Thermosipho melanesiensis (strain DSM 12029 / CIP 104789 / BI429) protein is tRNA (guanine-N(1)-)-methyltransferase.